We begin with the raw amino-acid sequence, 97 residues long: Putative pterin-4-alpha-carbinolamine dehydratase (97 aa).

Belongs to the pterin-4-alpha-carbinolamine dehydratase family.

It catalyses the reaction (4aS,6R)-4a-hydroxy-L-erythro-5,6,7,8-tetrahydrobiopterin = (6R)-L-erythro-6,7-dihydrobiopterin + H2O. The chain is Putative pterin-4-alpha-carbinolamine dehydratase from Ruegeria pomeroyi (strain ATCC 700808 / DSM 15171 / DSS-3) (Silicibacter pomeroyi).